The primary structure comprises 602 residues: Pentatricopeptide repeat-containing protein At5g11310, mitochondrial (602 aa).

A mitochondrion-targeting transit peptide spans 1–35; that stretch reads MNSLFTAFRRNLLLNPNPHRNFFLHRLLSSSRRSS. 11 PPR repeats span residues 134 to 165, 172 to 202, 211 to 241, 249 to 283, 284 to 318, 319 to 353, 354 to 388, 389 to 423, 424 to 458, 459 to 493, and 494 to 528; these read SPSL…VRSD, SADT…ARSY, ELRL…IGGT, SVRI…NVKP, TVVT…EMEI, NFMV…ESGP, TIVT…GVDP, TTTT…GHSP, DRLT…GIDP, DLLT…GIIP, and QYIT…PHSK.

Belongs to the PPR family. P subfamily.

The protein localises to the mitochondrion. This chain is Pentatricopeptide repeat-containing protein At5g11310, mitochondrial, found in Arabidopsis thaliana (Mouse-ear cress).